Here is a 308-residue protein sequence, read N- to C-terminus: NAD kinase (308 aa).

Aspartate 86 functions as the Proton acceptor in the catalytic mechanism. NAD(+) contacts are provided by residues aspartate 86–glycine 87, arginine 91, asparagine 160–glutamate 161, aspartate 190, and threonine 201–serine 206.

Belongs to the NAD kinase family. The cofactor is a divalent metal cation.

The protein resides in the cytoplasm. The enzyme catalyses NAD(+) + ATP = ADP + NADP(+) + H(+). In terms of biological role, involved in the regulation of the intracellular balance of NAD and NADP, and is a key enzyme in the biosynthesis of NADP. Catalyzes specifically the phosphorylation on 2'-hydroxyl of the adenosine moiety of NAD to yield NADP. In Mycolicibacterium paratuberculosis (strain ATCC BAA-968 / K-10) (Mycobacterium paratuberculosis), this protein is NAD kinase.